Here is a 299-residue protein sequence, read N- to C-terminus: Acidic endochitinase Pun g 14, amyloplastic (299 aa).

Residues 1-26 (MAKTLPFSRALLLSLSILLVARAISA) constitute an amyloplast transit peptide. The region spanning 27–299 (GDIAIYWGQN…TYSTTIKDQV (273 aa)) is the GH18 domain. Disulfide bonds link Cys46–Cys93 and Cys76–Cys83. Glu153 (proton donor) is an active-site residue. Cys185 and Cys216 form a disulfide bridge.

Belongs to the glycosyl hydrolase 18 family. Chitinase class III subfamily. As to quaternary structure, monomer. As to expression, highly expressed in seeds and to a lesser extent in the skin of the pomegranate fruit (at protein level). Not expressed in leaves or flesh of the fruit (at protein level).

It localises to the plastid. The protein localises to the amyloplast. It catalyses the reaction Random endo-hydrolysis of N-acetyl-beta-D-glucosaminide (1-&gt;4)-beta-linkages in chitin and chitodextrins.. With respect to regulation, activity is not affected by addition of 10 mM Ca(2+) or removal of Ca(2+). In terms of biological role, hydrolyzes chitin. Probable calcium storage protein of the seeds. Binds calcium ions with high capacity and low affinity. Involved in seed germination. This chain is Acidic endochitinase Pun g 14, amyloplastic, found in Punica granatum (Pomegranate).